Here is a 221-residue protein sequence, read N- to C-terminus: uncharacterized protein (221 aa).

The first 18 residues, 1-18 (MKRFLLLIILFGISFSFV), serve as a signal peptide directing secretion.

This is an uncharacterized protein from Aquifex aeolicus (strain VF5).